The primary structure comprises 175 residues: Transcription factor E (175 aa).

The region spanning 4–88 (AEDLFINLAK…YWKPNIDQIN (85 aa)) is the HTH TFE/IIEalpha-type domain.

It belongs to the TFE family. Monomer. Interaction with RNA polymerase subunits RpoF and RpoE is necessary for Tfe stimulatory transcription activity. Able to interact with Tbp and RNA polymerase in the absence of DNA promoter. Interacts both with the preinitiation and elongation complexes.

In terms of biological role, transcription factor that plays a role in the activation of archaeal genes transcribed by RNA polymerase. Facilitates transcription initiation by enhancing TATA-box recognition by TATA-box-binding protein (Tbp), and transcription factor B (Tfb) and RNA polymerase recruitment. Not absolutely required for transcription in vitro, but particularly important in cases where Tbp or Tfb function is not optimal. It dynamically alters the nucleic acid-binding properties of RNA polymerases by stabilizing the initiation complex and destabilizing elongation complexes. Seems to translocate with the RNA polymerase following initiation and acts by binding to the non template strand of the transcription bubble in elongation complexes. In Saccharolobus islandicus (strain Y.N.15.51 / Yellowstone #2) (Sulfolobus islandicus), this protein is Transcription factor E.